The primary structure comprises 64 residues: DNA gyrase inhibitor YacG (64 aa).

4 residues coordinate Zn(2+): cysteine 9, cysteine 12, cysteine 28, and cysteine 32. Residues 45-64 form a disordered region; sequence NAIAGAPDMSDSDGWSEDQY. A compositionally biased stretch (acidic residues) spans 54–64; sequence SDSDGWSEDQY.

This sequence belongs to the DNA gyrase inhibitor YacG family. In terms of assembly, interacts with GyrB. Zn(2+) is required as a cofactor.

Inhibits all the catalytic activities of DNA gyrase by preventing its interaction with DNA. Acts by binding directly to the C-terminal domain of GyrB, which probably disrupts DNA binding by the gyrase. This is DNA gyrase inhibitor YacG from Vibrio parahaemolyticus serotype O3:K6 (strain RIMD 2210633).